The sequence spans 475 residues: Ankyrin repeat, SAM and basic leucine zipper domain-containing protein 1 (475 aa).

The interval 1–24 (MAASALRGPPVAGGGESSESEDDG) is disordered. A phosphoserine mark is found at serine 17, serine 18, and serine 20. 6 ANK repeats span residues 45 to 74 (EKKEKFKKAMTIGDVSLVQELLDSGISVDS), 78 to 107 (YGWTPLMYAASVANAELVRVLLDRGANASF), 110 to 144 (DKQSILITACSAHGSEEQILKCVELLLSRNADPNV), 148 to 177 (RLMTPIMYAARDGHTQVVALLVAHGAEVNT), 181 to 210 (NGYTALTWAARQGHKNIVLKLLELGANKML), and 214 to 243 (DGKMPSEIAKRNKHHEIFNLLSFTLNPLEG). The SAM domain occupies 272–334 (SYTAFGDLEV…KILAALKELQ (63 aa)).

In terms of assembly, interacts with DDX4, PIWIL1, RANBP9 and TDRD1.

It is found in the cytoplasm. Its function is as follows. Plays a central role during spermatogenesis by repressing transposable elements and preventing their mobilization, which is essential for the germline integrity. Acts via the piRNA metabolic process, which mediates the repression of transposable elements during meiosis by forming complexes composed of piRNAs and Piwi proteins and governs the methylation and subsequent repression of transposons. Its association with pi-bodies suggests a participation in the primary piRNAs metabolic process. Required prior to the pachytene stage to facilitate the production of multiple types of piRNAs, including those associated with repeats involved in the regulation of retrotransposons. May act by mediating protein-protein interactions during germ cell maturation. The sequence is that of Ankyrin repeat, SAM and basic leucine zipper domain-containing protein 1 (ASZ1) from Gorilla gorilla gorilla (Western lowland gorilla).